The following is a 240-amino-acid chain: Purine nucleoside phosphorylase RC0672 (240 aa).

Residues histidine 60, cysteine 96, and histidine 113 each contribute to the Zn(2+) site.

It belongs to the purine nucleoside phosphorylase YfiH/LACC1 family. As to quaternary structure, homodimer. It depends on Cu(2+) as a cofactor. The cofactor is Zn(2+).

The enzyme catalyses adenosine + phosphate = alpha-D-ribose 1-phosphate + adenine. The catalysed reaction is S-methyl-5'-thioadenosine + phosphate = 5-(methylsulfanyl)-alpha-D-ribose 1-phosphate + adenine. It carries out the reaction inosine + phosphate = alpha-D-ribose 1-phosphate + hypoxanthine. It catalyses the reaction adenosine + H2O + H(+) = inosine + NH4(+). In terms of biological role, purine nucleoside enzyme that catalyzes the phosphorolysis of adenosine and inosine nucleosides, yielding D-ribose 1-phosphate and the respective free bases, adenine and hypoxanthine. Also catalyzes the phosphorolysis of S-methyl-5'-thioadenosine into adenine and S-methyl-5-thio-alpha-D-ribose 1-phosphate. Also has adenosine deaminase activity. The polypeptide is Purine nucleoside phosphorylase RC0672 (Rickettsia conorii (strain ATCC VR-613 / Malish 7)).